We begin with the raw amino-acid sequence, 599 residues long: Transcription factor COE4 (599 aa).

Residues R64–N67 are interaction with DNA. The C5-type zinc-finger motif lies at C152–C171. Interaction with DNA stretches follow at residues N198–N205 and N237–K240. An IPT/TIG domain is found at P256–T339. Disordered stretches follow at residues G449–G473 and V556–F586. The segment covering S464–G473 has biased composition (low complexity).

This sequence belongs to the COE family. Forms either a homodimer or a heterodimer with a related family member. In terms of tissue distribution, expressed in the olfactory epithelium, including in both neuronal and basal cell layers. Absent in the vomeronasal organ. Absent from NK cells and CD8(+) T cells.

It localises to the nucleus. Its function is as follows. Transcription factor. Positively modulates transcription, perhaps less strongly than other early B cell factor/EBF family proteins. Binds an EBF1/Olf-1 consensus site in vitro. This chain is Transcription factor COE4 (Ebf4), found in Mus musculus (Mouse).